The chain runs to 120 residues: Ig heavy chain V region 36-65 (120 aa).

An Ig-like domain is found at 1 to 111 (VQLQQSGAEL…GGSYYFDYWG (111 aa)).

This Mus musculus (Mouse) protein is Ig heavy chain V region 36-65.